Consider the following 175-residue polypeptide: S-fimbrial protein subunit SfaG (175 aa).

Residues 1–27 (MVKDIIKTVTFSCMLAGSMFVTCHVCA) form the signal peptide. Cysteine 43 and cysteine 83 are joined by a disulfide.

This sequence belongs to the fimbrial protein family.

Its subcellular location is the fimbrium. Functionally, fimbriae (also called pili), polar filaments radiating from the surface of the bacterium to a length of 0.5-1.5 micrometers and numbering 100-300 per cell, enable bacteria to colonize the epithelium of specific host organs. In terms of biological role, a minor fimbrial subunit. This protein is necessary for full expression of S-specific binding. S-fimbrial adhesins enable pathogenic E.coli causing urinary-tract infections or newborn meningitis to attach to glycoproteins terminating with alpha-sialic acid-(2-3)-beta-Gal. In Escherichia coli O6:K15:H31 (strain 536 / UPEC), this protein is S-fimbrial protein subunit SfaG (sfaG).